The following is a 535-amino-acid chain: GMP synthase [glutamine-hydrolyzing] (535 aa).

A Glutamine amidotransferase type-1 domain is found at 24 to 217 (KILIVDFGSQ…VRNISGLGGD (194 aa)). Cysteine 101 functions as the Nucleophile in the catalytic mechanism. Residues histidine 191 and glutamate 193 contribute to the active site. One can recognise a GMPS ATP-PPase domain in the interval 218-410 (WTMHAFREEE…LGLPDVFVGR (193 aa)). Position 245 to 251 (245 to 251 (SGGVDSA)) interacts with ATP.

In terms of assembly, homodimer.

It carries out the reaction XMP + L-glutamine + ATP + H2O = GMP + L-glutamate + AMP + diphosphate + 2 H(+). The protein operates within purine metabolism; GMP biosynthesis; GMP from XMP (L-Gln route): step 1/1. In terms of biological role, catalyzes the synthesis of GMP from XMP. This is GMP synthase [glutamine-hydrolyzing] from Bradyrhizobium sp. (strain ORS 278).